A 189-amino-acid chain; its full sequence is Insecticyanin-A (189 aa).

2 disulfides stabilise this stretch: C9/C119 and C43/C175.

This sequence belongs to the calycin superfamily. Lipocalin family. Homotetramer. Synthesized only in the caterpillars, apparently by the epidermis and secreted into the hemolymph. The protein is passed over from the larval hemolymph to that of pupae and adults and is sequestered in the eggs.

Its subcellular location is the secreted. This protein binds a chromophore: biliverdin IX, isomer gamma. Mixed with lipoprotein-bound carotenes, this blue protein provides hornworms with their green cryptic coloration which serves a camouflage. The protein is Insecticyanin-A (INSA) of Manduca sexta (Tobacco hawkmoth).